Here is a 161-residue protein sequence, read N- to C-terminus: Transcription elongation factor GreA (161 aa).

The stretch at 8 to 28 (LTQEGFKQLEKELENLIQVKR) forms a coiled coil.

The protein belongs to the GreA/GreB family.

Its function is as follows. Necessary for efficient RNA polymerase transcription elongation past template-encoded arresting sites. The arresting sites in DNA have the property of trapping a certain fraction of elongating RNA polymerases that pass through, resulting in locked ternary complexes. Cleavage of the nascent transcript by cleavage factors such as GreA or GreB allows the resumption of elongation from the new 3'terminus. GreA releases sequences of 2 to 3 nucleotides. The sequence is that of Transcription elongation factor GreA from Mycoplasma genitalium (strain ATCC 33530 / DSM 19775 / NCTC 10195 / G37) (Mycoplasmoides genitalium).